The following is a 342-amino-acid chain: Mitogen-activated protein kinase kinase kinase 20 (342 aa).

Residues 3–268 (WVRGETIGFG…AEMLLNHSFV (266 aa)) form the Protein kinase domain. 9-17 (IGFGTFSTV) provides a ligand contact to ATP. Phosphoserine is present on Ser-18. The residue at position 19 (Thr-19) is a Phosphothreonine. Lys-36 is an ATP binding site. Residues Tyr-41 and Tyr-66 each carry the phosphotyrosine modification. Ser-93 and Ser-114 each carry phosphoserine. Residue Asp-131 is the Proton acceptor of the active site. Residues 285–342 (KDEDKVLMSPKCPFEFDDWDSFTLDSNPSFDSPVERLGSLVSGSIPDWSVGGSWLTVR) are required for MKK3 binding.

This sequence belongs to the protein kinase superfamily. Ser/Thr protein kinase family. As to quaternary structure, interacts with MKK3 and MPK18 via its C-terminal domain. Binds to MKK5. In terms of processing, autophosphorylates; active in phosphorylated state. Dephosphorylated by ABI1. Expressed in roots, seedlings, leaves, flower buds, flowers and siliques.

It is found in the nucleus. The protein localises to the cytoplasm. It carries out the reaction L-seryl-[protein] + ATP = O-phospho-L-seryl-[protein] + ADP + H(+). It catalyses the reaction L-threonyl-[protein] + ATP = O-phospho-L-threonyl-[protein] + ADP + H(+). With respect to regulation, activated through serine, threonine and tyrosine phosphorylation, especially upon abscisic acid (ABA) treatment. Restricted activity by ABI1-mediated dephosphorylation. Its function is as follows. Mitogen-activated protein kinase kinase (MAPKK) that phosphorylates both MKK3 and MPK18 and regulate two separate signaling pathways involved in root microtubule functions. MAPKK which regulates abscisic acid (ABA) responses in a MAPKKK20-MKK5-MPK6 cascade involved in root growth (e.g. root cell division and elongation) and stomatal response, probably via MKK5 activation by protein phosphorylation and subsequent activation of MAPK6 by MKK5. Involved in various abiotic stresses (e.g. osmotic stress, cold and hydrogen peroxide) responses by phosphorylating and thus regulating MPK6 activity, in an ABA-independent manner. The chain is Mitogen-activated protein kinase kinase kinase 20 from Arabidopsis thaliana (Mouse-ear cress).